The sequence spans 760 residues: MENNRNFPARQFHSLTFFAGLCIGITPVAQALAAEGQANADDTLVVEASTPSLYAPQQSADPKFSRPVADTTRTMTVISEQVIKDQGATNLTDALKNVPGVGAFFAGENGNSTTGDAIYMRGADTSNSIYIDGIRDIGSVSRDTFNTEQVEVIKGPSGTDYGRSAPTGSINMISKQPRNDSGIDASASIGSAWFRRGTLDVNQVIGDTTAVRLNVMGEKTHDAGRDKVKNERYGVAPSVVFGLGTANRLYLNYLHVTQHNTPDGGIPTIGLPGYSAPSAGTAALNHSGKVDTHNFYGTDSDYDDSTTDTATMRFEHDINDNTTIRNTTRWSRVKQDYLMTAIMGGASNITQPTSDVNSWTWSRTANTKDVSNKILTNQTNLTSTFYTGAIGHDLSTGVEFTRETQTNYGVNPVTLPAVNIYHPDSSIHPGGLTRNGANANGQTDTFAIYAFDTLQITRDFELNGGIRLDNYHTEYDSATACGGSGRGAITCPAGVAKGSPVTTVDTAKSGNLVNWKAGALYHLTENGNVYINYAVSQQPPGGNNFALAQSGSGNSANRTDFKPQKANTSEIGTKWQVLDKRLLLTAALFRTDIENEVEQNDDGTYSQYGKKRVEGYEISVAGNITPAWQMIGGYTQQKATIKNGKDVAQDGSSSLPYTPEHAFTLWSQYQATDDISVGAGARYIGSMHKGSDGAVGTPAFTEGYWVADAKLGYRVNRNLDFQLNVYNLFDTDYVASINKSGYRYHPGEPRTFLLTANMHF.

The signal sequence occupies residues 1–31 (MENNRNFPARQFHSLTFFAGLCIGITPVAQA). The region spanning 67 to 175 (PVADTTRTMT…PTGSINMISK (109 aa)) is the TBDR plug domain. The TBDR beta-barrel domain occupies 180-760 (DSGIDASASI…TFLLTANMHF (581 aa)). The short motif at 743–760 (RYHPGEPRTFLLTANMHF) is the TonB C-terminal box element.

This sequence belongs to the TonB-dependent receptor family.

The protein resides in the cell outer membrane. Involved in the active transport across the outer membrane of iron complexed with catecholate siderophores such as dihydroxybenzoylserine and dihydroxybenzoate. It derives its energy for transport by interacting with the trans-periplasmic membrane protein TonB. Can also transport catechol-substituted cephalosporins. Receptor for microcins M, H47 and E492. This is Catecholate siderophore receptor Fiu (fiu) from Escherichia coli O6:H1 (strain CFT073 / ATCC 700928 / UPEC).